Reading from the N-terminus, the 2254-residue chain is Acetyl-CoA carboxylase 1 (2254 aa).

The Biotin carboxylation domain maps to 36 to 543; it reads PIHSILIANN…HTGWLDSRIA (508 aa). Residues 189-381 form the ATP-grasp domain; the sequence is NSNLVTIPEE…LPAAQVAVGM (193 aa). 215-272 lines the ATP pocket; sequence CQVVGYPAMIKASWGGGGKGIRKVHNDDEVRALFKQVQGEVPGSPIFIMKVASQSRHL. Mg(2+) is bound by residues Glu338, Glu352, and Asn354. Mn(2+) is bound by residues Glu338, Glu352, and Asn354. Arg356 is a catalytic residue. Residues 670–744 form the Biotinyl-binding domain; the sequence is LQNDHDPSKL…QAGELIANLD (75 aa). Lys711 is modified (N6-biotinyllysine). Residue Thr1031 is modified to Phosphothreonine. Position 1192 is a phosphoserine (Ser1192). Residues 1492–1831 enclose the CoA carboxyltransferase N-terminal domain; that stretch reads QYKPLGYLDR…YVGGPLPVLA (340 aa). A carboxyltransferase region spans residues 1492–2150; that stretch reads QYKPLGYLDR…ESSLVKNVRE (659 aa). Arg1740, Lys2041, and Arg2043 together coordinate CoA. The region spanning 1835–2150 is the CoA carboxyltransferase C-terminal domain; the sequence is PPERIVEYVP…ESSLVKNVRE (316 aa).

Homodimer. Requires biotin as cofactor. It depends on Mg(2+) as a cofactor. The cofactor is Mn(2+). As to expression, expressed in roots, trichomes, epidermal leaf cells, siliques, petals, anthers, and seeds.

Its subcellular location is the cytoplasm. It is found in the cytosol. The catalysed reaction is hydrogencarbonate + acetyl-CoA + ATP = malonyl-CoA + ADP + phosphate + H(+). It catalyses the reaction N(6)-biotinyl-L-lysyl-[protein] + hydrogencarbonate + ATP = N(6)-carboxybiotinyl-L-lysyl-[protein] + ADP + phosphate + H(+). It functions in the pathway lipid metabolism; malonyl-CoA biosynthesis; malonyl-CoA from acetyl-CoA: step 1/1. Functionally, multifunctional enzyme that catalyzes the carboxylation of acetyl-CoA, forming malonyl-CoA, which is used in the plastid for fatty acid synthesis and in the cytosol in various biosynthetic pathways including fatty acid elongation. Required for very long chain fatty acids elongation. Necessary for embryo and plant development. Plays a central function in embryo morphogenesis, especially in apical meristem development. Involved in cell proliferation and tissue patterning. May act as a repressor of cytokinin response. The protein is Acetyl-CoA carboxylase 1 (ACC1) of Arabidopsis thaliana (Mouse-ear cress).